The primary structure comprises 380 residues: Cytochrome b (380 aa).

The next 4 membrane-spanning stretches (helical) occupy residues 34-54 (FGSLLGICLATQILTGLLLAM), 78-99 (WLIRNLHANGASFFFICVYLHI), 114-134 (WNTGILLLLTLMATAFVGYVL), and 179-199 (FFALHFLLPFAIAGLTLIHLT). The heme b site is built by His-84 and His-98. The heme b site is built by His-183 and His-197. An a ubiquinone-binding site is contributed by His-202. 4 consecutive transmembrane segments (helical) span residues 227–247 (LKDALGFMLMFLPLTTLALFS), 289–309 (LGGVLALAASVLILFLSPLLH), 321–341 (LSQLLFWTLVANLFILTWVGS), and 348–368 (FIIIGQLASLTYFTILLILFP).

Belongs to the cytochrome b family. In terms of assembly, the cytochrome bc1 complex contains 11 subunits: 3 respiratory subunits (MT-CYB, CYC1 and UQCRFS1), 2 core proteins (UQCRC1 and UQCRC2) and 6 low-molecular weight proteins (UQCRH/QCR6, UQCRB/QCR7, UQCRQ/QCR8, UQCR10/QCR9, UQCR11/QCR10 and a cleavage product of UQCRFS1). This cytochrome bc1 complex then forms a dimer. It depends on heme b as a cofactor.

The protein resides in the mitochondrion inner membrane. Component of the ubiquinol-cytochrome c reductase complex (complex III or cytochrome b-c1 complex) that is part of the mitochondrial respiratory chain. The b-c1 complex mediates electron transfer from ubiquinol to cytochrome c. Contributes to the generation of a proton gradient across the mitochondrial membrane that is then used for ATP synthesis. The protein is Cytochrome b (MT-CYB) of Oceanites oceanicus (Wilson's storm petrel).